A 491-amino-acid polypeptide reads, in one-letter code: Lysine--tRNA ligase (491 aa).

Positions 400 and 407 each coordinate Mg(2+).

This sequence belongs to the class-II aminoacyl-tRNA synthetase family. Homodimer. Mg(2+) is required as a cofactor.

It is found in the cytoplasm. The catalysed reaction is tRNA(Lys) + L-lysine + ATP = L-lysyl-tRNA(Lys) + AMP + diphosphate. The chain is Lysine--tRNA ligase from Mesomycoplasma hyopneumoniae (strain J / ATCC 25934 / NCTC 10110) (Mycoplasma hyopneumoniae).